Consider the following 302-residue polypeptide: Probable alpha-L-glutamate ligase (302 aa).

The region spanning 112 to 294 (LQLLLKAGIP…IAAEIIDYIE (183 aa)) is the ATP-grasp domain. ATP is bound by residues K148, 185-186 (DF), D194, and 218-220 (RAN). The Mg(2+) site is built by D255, E267, and N269. D255, E267, and N269 together coordinate Mn(2+).

Belongs to the RimK family. It depends on Mg(2+) as a cofactor. Mn(2+) serves as cofactor.

The chain is Probable alpha-L-glutamate ligase from Haemophilus influenzae (strain ATCC 51907 / DSM 11121 / KW20 / Rd).